The primary structure comprises 1400 residues: Tiny macrocysts protein C (1400 aa).

The next 8 helical transmembrane spans lie at 59–79 (ILTI…GFKQ), 112–132 (IFFW…WYVA), 152–172 (FVST…LIGL), 196–216 (ANLS…IVGF), 240–260 (FDVY…LVDF), 266–286 (SIVY…ILPY), 296–316 (SGFY…MGIN), and 320–340 (TATT…IGYF). Disordered stretches follow at residues 367 to 393 (FNEI…SKVT) and 683 to 712 (ERSG…RGKY). Residues 369–386 (EITKNEKSKTGDSKEKES) are compositionally biased toward basic and acidic residues. 4 consecutive transmembrane segments (helical) span residues 726–746 (WLMI…LIVL), 975–995 (TMLY…AVLF), 1162–1182 (VLAI…TYSV), and 1342–1362 (VLTS…LLLF).

It localises to the membrane. This is Tiny macrocysts protein C (tmcC) from Dictyostelium discoideum (Social amoeba).